Consider the following 348-residue polypeptide: NADH-ubiquinone oxidoreductase chain 2 (348 aa).

The next 10 helical transmembrane spans lie at 3-23 (PFIL…TFAS), 24-44 (SHWL…IPLM), 60-80 (FITQ…NAWI), 95-115 (ASML…HFWL), 136-156 (LAPF…ITFL), 177-197 (ILAY…QFNQ), 198-218 (QLAL…FMIF), 239-259 (LTAI…LSGF), 273-293 (DIPL…YFYL), and 325-345 (LAIS…TLAL).

It belongs to the complex I subunit 2 family.

Its subcellular location is the mitochondrion inner membrane. The enzyme catalyses a ubiquinone + NADH + 5 H(+)(in) = a ubiquinol + NAD(+) + 4 H(+)(out). Its function is as follows. Core subunit of the mitochondrial membrane respiratory chain NADH dehydrogenase (Complex I) that is believed to belong to the minimal assembly required for catalysis. Complex I functions in the transfer of electrons from NADH to the respiratory chain. The immediate electron acceptor for the enzyme is believed to be ubiquinone. The chain is NADH-ubiquinone oxidoreductase chain 2 (MT-ND2) from Gadus morhua (Atlantic cod).